We begin with the raw amino-acid sequence, 147 residues long: Lysozyme C (147 aa).

The first 18 residues, 1–18 (MRSLLILVLCFLPLAALG), serve as a signal peptide directing secretion. Residues 19–147 (KVFGRCELAA…VQAWIRGCRL (129 aa)) enclose the C-type lysozyme domain. 4 disulfides stabilise this stretch: C24-C145, C48-C133, C82-C98, and C94-C112. Residues E53 and D70 contribute to the active site. D119 serves as a coordination point for substrate.

Belongs to the glycosyl hydrolase 22 family. Monomer. As to expression, in the egg white and polymorphonuclear leukocytes.

The protein resides in the secreted. It carries out the reaction Hydrolysis of (1-&gt;4)-beta-linkages between N-acetylmuramic acid and N-acetyl-D-glucosamine residues in a peptidoglycan and between N-acetyl-D-glucosamine residues in chitodextrins.. Lysozymes have primarily a bacteriolytic function; those in tissues and body fluids are associated with the monocyte-macrophage system and enhance the activity of immunoagents. Has bacteriolytic activity against M.luteus. This Gallus gallus (Chicken) protein is Lysozyme C (LYZ).